The sequence spans 466 residues: MRSAWIEKRRGSANVSQLHYARQGVVTEEMAYVAKRENLPESLVMEEVARGRMIIPANINHANLEPMAIGIASKCKVNANIGASPNASDASEEVKKLELAVKYGADTVMDLSTGGVNLDEVRTAIINASPVPIGTVPVYQALESVHGSIERLSEDDFLHIIEKHCQQGVDYQTIHAGLLIEHLPKVKGRLTGIVSRGGGILAQWMLYHHKQNPLYTRFEDICEIFKRYDCTFSLGDSLRPGCQHDASDDAQLAELKTLGELTRRAWKHDVQVMVEGPGHVPMDQIEFNVKKQMEECSEAPFYVLGPLVTDIAPGYDHITSAIGAAMAGWHGTAMLCYVTPKEHLGLPNADDVREGLIAYKIAAHAADIARHRPGARDRDDELSRARYAFDWNKQFELSLDPERAKEYHDETLPADIYKQAEFCSMCGPKHCPMQTKITDKDLESLEEVLKAKGGAELSTAKLDRAD.

Substrate-binding positions include N80, M109, Y139, H175, 195-197 (SRG), 236-239 (DSLR), and E275. Zn(2+) is bound at residue H279. Y302 contributes to the substrate binding site. H343 is a Zn(2+) binding site. Residues C423, C426, and C431 each coordinate [4Fe-4S] cluster.

Belongs to the ThiC family. The cofactor is [4Fe-4S] cluster.

It catalyses the reaction 5-amino-1-(5-phospho-beta-D-ribosyl)imidazole + S-adenosyl-L-methionine = 4-amino-2-methyl-5-(phosphooxymethyl)pyrimidine + CO + 5'-deoxyadenosine + formate + L-methionine + 3 H(+). Its pathway is cofactor biosynthesis; thiamine diphosphate biosynthesis. Catalyzes the synthesis of the hydroxymethylpyrimidine phosphate (HMP-P) moiety of thiamine from aminoimidazole ribotide (AIR) in a radical S-adenosyl-L-methionine (SAM)-dependent reaction. The chain is Phosphomethylpyrimidine synthase from Synechococcus sp. (strain RCC307).